A 210-amino-acid chain; its full sequence is Redox-sensing transcriptional repressor Rex (210 aa).

A DNA-binding region (H-T-H motif) is located at residues K17–F56. G91–G96 provides a ligand contact to NAD(+).

The protein belongs to the transcriptional regulatory Rex family. In terms of assembly, homodimer.

It is found in the cytoplasm. Modulates transcription in response to changes in cellular NADH/NAD(+) redox state. This is Redox-sensing transcriptional repressor Rex from Clostridium botulinum (strain Loch Maree / Type A3).